Reading from the N-terminus, the 510-residue chain is Probable malate:quinone oxidoreductase (510 aa).

The protein belongs to the MQO family. The cofactor is FAD.

It carries out the reaction (S)-malate + a quinone = a quinol + oxaloacetate. Its pathway is carbohydrate metabolism; tricarboxylic acid cycle; oxaloacetate from (S)-malate (quinone route): step 1/1. This Wigglesworthia glossinidia brevipalpis protein is Probable malate:quinone oxidoreductase.